The primary structure comprises 93 residues: UPF0223 protein YfdD (93 aa).

It belongs to the UPF0223 family.

The chain is UPF0223 protein YfdD (yfdD) from Lactococcus lactis subsp. lactis (strain IL1403) (Streptococcus lactis).